Here is a 1397-residue protein sequence, read N- to C-terminus: DNA-directed RNA polymerase subunit beta (1397 aa).

The protein belongs to the RNA polymerase beta chain family. As to quaternary structure, the RNAP catalytic core consists of 2 alpha, 1 beta, 1 beta' and 1 omega subunit. When a sigma factor is associated with the core the holoenzyme is formed, which can initiate transcription.

It carries out the reaction RNA(n) + a ribonucleoside 5'-triphosphate = RNA(n+1) + diphosphate. Its function is as follows. DNA-dependent RNA polymerase catalyzes the transcription of DNA into RNA using the four ribonucleoside triphosphates as substrates. This chain is DNA-directed RNA polymerase subunit beta, found in Rhodospirillum centenum (strain ATCC 51521 / SW).